A 221-amino-acid polypeptide reads, in one-letter code: Octanoyltransferase (221 aa).

Positions 31–216 (GQIGDTLLLL…SLCAIFDLRP (186 aa)) constitute a BPL/LPL catalytic domain. Substrate contacts are provided by residues 76–83 (RGGEVTYH), 145–147 (AIG), and 159–161 (GLA). The Acyl-thioester intermediate role is filled by Cys177.

It belongs to the LipB family.

The protein resides in the cytoplasm. It carries out the reaction octanoyl-[ACP] + L-lysyl-[protein] = N(6)-octanoyl-L-lysyl-[protein] + holo-[ACP] + H(+). It participates in protein modification; protein lipoylation via endogenous pathway; protein N(6)-(lipoyl)lysine from octanoyl-[acyl-carrier-protein]: step 1/2. Its function is as follows. Catalyzes the transfer of endogenously produced octanoic acid from octanoyl-acyl-carrier-protein onto the lipoyl domains of lipoate-dependent enzymes. Lipoyl-ACP can also act as a substrate although octanoyl-ACP is likely to be the physiological substrate. In Chloroflexus aggregans (strain MD-66 / DSM 9485), this protein is Octanoyltransferase.